The sequence spans 481 residues: Glutamyl-tRNA(Gln) amidotransferase subunit A (481 aa).

Catalysis depends on charge relay system residues Lys77 and Ser151. The active-site Acyl-ester intermediate is the Ser175.

This sequence belongs to the amidase family. GatA subfamily. In terms of assembly, heterotrimer of A, B and C subunits.

The enzyme catalyses L-glutamyl-tRNA(Gln) + L-glutamine + ATP + H2O = L-glutaminyl-tRNA(Gln) + L-glutamate + ADP + phosphate + H(+). In terms of biological role, allows the formation of correctly charged Gln-tRNA(Gln) through the transamidation of misacylated Glu-tRNA(Gln) in organisms which lack glutaminyl-tRNA synthetase. The reaction takes place in the presence of glutamine and ATP through an activated gamma-phospho-Glu-tRNA(Gln). The chain is Glutamyl-tRNA(Gln) amidotransferase subunit A from Rubrobacter xylanophilus (strain DSM 9941 / JCM 11954 / NBRC 16129 / PRD-1).